The primary structure comprises 245 residues: Sugar fermentation stimulation protein homolog (245 aa).

It belongs to the SfsA family.

This Yersinia pestis bv. Antiqua (strain Nepal516) protein is Sugar fermentation stimulation protein homolog.